Reading from the N-terminus, the 234-residue chain is Glucosamine-6-phosphate deaminase (234 aa).

The active-site Proton acceptor; for enolization step is Asp-62. The active-site For ring-opening step is the Asn-128. The Proton acceptor; for ring-opening step role is filled by His-130. The For ring-opening step role is filled by Glu-135.

It belongs to the glucosamine/galactosamine-6-phosphate isomerase family. NagB subfamily.

The catalysed reaction is alpha-D-glucosamine 6-phosphate + H2O = beta-D-fructose 6-phosphate + NH4(+). It functions in the pathway amino-sugar metabolism; N-acetylneuraminate degradation; D-fructose 6-phosphate from N-acetylneuraminate: step 5/5. Functionally, catalyzes the reversible isomerization-deamination of glucosamine 6-phosphate (GlcN6P) to form fructose 6-phosphate (Fru6P) and ammonium ion. This Streptococcus equi subsp. zooepidemicus (strain MGCS10565) protein is Glucosamine-6-phosphate deaminase.